Here is a 358-residue protein sequence, read N- to C-terminus: Protein UL24 (358 aa).

This sequence belongs to the herpesviridae US22 family.

It localises to the virion tegument. In Homo sapiens (Human), this protein is Protein UL24 (UL24).